Reading from the N-terminus, the 129-residue chain is Phosphoribosyl-AMP cyclohydrolase (129 aa).

Residue aspartate 78 participates in Mg(2+) binding. Position 79 (cysteine 79) interacts with Zn(2+). The Mg(2+) site is built by aspartate 80 and aspartate 82. The Zn(2+) site is built by cysteine 96 and cysteine 103.

It belongs to the PRA-CH family. Homodimer. Requires Mg(2+) as cofactor. The cofactor is Zn(2+).

The protein localises to the cytoplasm. The catalysed reaction is 1-(5-phospho-beta-D-ribosyl)-5'-AMP + H2O = 1-(5-phospho-beta-D-ribosyl)-5-[(5-phospho-beta-D-ribosylamino)methylideneamino]imidazole-4-carboxamide. The protein operates within amino-acid biosynthesis; L-histidine biosynthesis; L-histidine from 5-phospho-alpha-D-ribose 1-diphosphate: step 3/9. Its function is as follows. Catalyzes the hydrolysis of the adenine ring of phosphoribosyl-AMP. This chain is Phosphoribosyl-AMP cyclohydrolase, found in Nitrosomonas eutropha (strain DSM 101675 / C91 / Nm57).